The primary structure comprises 479 residues: Ribosomal RNA small subunit methyltransferase F (479 aa).

Residues 125 to 131, E149, D176, and D194 each bind S-adenosyl-L-methionine; that span reads AAAPGSK. C247 acts as the Nucleophile in catalysis.

Belongs to the class I-like SAM-binding methyltransferase superfamily. RsmB/NOP family.

The protein localises to the cytoplasm. The enzyme catalyses cytidine(1407) in 16S rRNA + S-adenosyl-L-methionine = 5-methylcytidine(1407) in 16S rRNA + S-adenosyl-L-homocysteine + H(+). Specifically methylates the cytosine at position 1407 (m5C1407) of 16S rRNA. The chain is Ribosomal RNA small subunit methyltransferase F from Escherichia coli O81 (strain ED1a).